The following is a 214-amino-acid chain: MPGEATETVPAAEQELHQPQAETGSGTESDSDDSPPELEQDSTQTTTQQAQLAAAAEIDEEPVSKAKQSRSEKKARKAMSKLGLRQVTGVTRVTIRKSKNILFVITKPDVYKSPASDTYIVFGEAKIEDLSQQAQLAAAEKFKVQGEAVSNIQENTQTPTVQEESEEEEVDETGVEVKDIELVMSQANVSRAKAVRALKNNSNDIVNAIMELTM.

The segment at M1–S80 is disordered. Acidic residues predominate over residues S29–Q40. Over residues D41–A56 the composition is skewed to low complexity. Residues S69–A134 form the NAC-A/B domain. The 38-residue stretch at V175 to L212 folds into the UBA domain.

Belongs to the NAC-alpha family.

May promote appropriate targeting of ribosome-nascent polypeptide complexes. In Xenopus tropicalis (Western clawed frog), this protein is Nascent polypeptide-associated complex subunit alpha (naca).